The following is a 65-amino-acid chain: Translational regulator CsrA (65 aa).

The protein belongs to the CsrA/RsmA family. Homodimer; the beta-strands of each monomer intercalate to form a hydrophobic core, while the alpha-helices form wings that extend away from the core.

The protein localises to the cytoplasm. Functionally, a key translational regulator that binds mRNA to regulate translation initiation and/or mRNA stability. Mediates global changes in gene expression, shifting from rapid growth to stress survival by linking envelope stress, the stringent response and the catabolite repression systems. Usually binds in the 5'-UTR; binding at or near the Shine-Dalgarno sequence prevents ribosome-binding, repressing translation, binding elsewhere in the 5'-UTR can activate translation and/or stabilize the mRNA. Its function is antagonized by small RNA(s). In Pseudomonas putida (strain ATCC 47054 / DSM 6125 / CFBP 8728 / NCIMB 11950 / KT2440), this protein is Translational regulator CsrA.